The following is a 98-amino-acid chain: Sec-independent protein translocase protein TatA (98 aa).

A helical membrane pass occupies residues 1 to 21; it reads MGAMSPWHWAIVALVVVILFG. A disordered region spans residues 43–98; that stretch reads VKEMQNDNSTPAPTAQSAPPPQSAPAELPVADTTTAPVTPPAPVQPQSQHTEPKSA. Residues 66–79 show a composition bias toward low complexity; the sequence is APAELPVADTTTAP.

This sequence belongs to the TatA/E family. In terms of assembly, the Tat system comprises two distinct complexes: a TatABC complex, containing multiple copies of TatA, TatB and TatC subunits, and a separate TatA complex, containing only TatA subunits. Substrates initially bind to the TatABC complex, which probably triggers association of the separate TatA complex to form the active translocon.

It is found in the cell membrane. Functionally, part of the twin-arginine translocation (Tat) system that transports large folded proteins containing a characteristic twin-arginine motif in their signal peptide across membranes. TatA could form the protein-conducting channel of the Tat system. This chain is Sec-independent protein translocase protein TatA, found in Rhodococcus erythropolis (Arthrobacter picolinophilus).